A 344-amino-acid polypeptide reads, in one-letter code: F17a-G fimbrial adhesin (344 aa).

The first 22 residues, 1 to 22 (MTNFYKVFLAVFILVCCNISQA), serve as a signal peptide directing secretion. Residues 23–199 (AVSFIGSTEN…SLNPFTLNDT (177 aa)) form a receptor-binding lectin domain region. Residues 65 to 66 (AN), 110 to 111 (DT), and 139 to 142 (STQG) each bind a carbohydrate. A disulfide bond links Cys-75 and Cys-132. A fimbrillin-binding domain region spans residues 200–344 (VTSCRLLTPS…GISTFTFSYQ (145 aa)). The disordered stretch occupies residues 288 to 308 (LKFGPDSPVKGNENQWQLSTG). A compositionally biased stretch (polar residues) spans 299 to 308 (NENQWQLSTG).

This sequence belongs to the fimbrial protein family.

Its subcellular location is the fimbrium. Functionally, essential fimbrial adhesion factor that mediates binding to N-acetylglucosamine-containing receptors in the host intestinal microvilli, leading to colonization of the intestinal tissue, and diarrhea or septicemia. Also confers adhesiveness to laminin and basement membranes. In Escherichia coli, this protein is F17a-G fimbrial adhesin (f17aG).